The primary structure comprises 325 residues: GMP reductase (325 aa).

The Thioimidate intermediate role is filled by Cys174. 203-226 (LIADGGIRTHGDIAKSIRFGASMV) lines the NADP(+) pocket.

It belongs to the IMPDH/GMPR family. GuaC type 2 subfamily.

It catalyses the reaction IMP + NH4(+) + NADP(+) = GMP + NADPH + 2 H(+). In terms of biological role, catalyzes the irreversible NADPH-dependent deamination of GMP to IMP. It functions in the conversion of nucleobase, nucleoside and nucleotide derivatives of G to A nucleotides, and in maintaining the intracellular balance of A and G nucleotides. The chain is GMP reductase from Staphylococcus aureus (strain bovine RF122 / ET3-1).